The primary structure comprises 201 residues: Akirin (201 aa).

Residues 1-133 are disordered; it reads MACATLKRAL…PRRPDSPQNL (133 aa). A Nuclear localization signal motif is present at residues 20–25; the sequence is PKRRRC. Residues serine 39 and serine 41 each carry the phosphoserine modification. Composition is skewed to polar residues over residues 44 to 57 and 65 to 75; these read GPST…TPSN and EPSPFSESSLA. Serine 67 is modified (phosphoserine). The segment covering 112–122 has biased composition (low complexity); sequence SESSGSEMGPE. Residues serine 123 and serine 129 each carry the phosphoserine modification.

Belongs to the akirin family. As to quaternary structure, interacts with dmap1. Interacts with bap60 and rel; interaction is immune stimulation-dependent; activates selected rel target gene promoters. Interacts with bap55; interaction is immune stimulation-dependent. Interacts with twi. In terms of processing, polyubiquitinated via 'Lys-63'-linked ubiquitin by Hyd, promoting interaction with rel. In terms of tissue distribution, ubiquitous.

Its subcellular location is the nucleus. Functionally, molecular adapter that acts as a bridge between a variety of multiprotein complexes, and which is required for embryonic development and for normal innate immune response. Acts as a regulator of embryonic myogenesis by bridging Twist (twi) with the SWI/SNF-like Brahma complex, promoting expression of twi-regulated genes during myogenesis. Effector of immune deficiency pathway (Imd) by acting either downstream of, or at the level of, the NF-kappa-B factor Relish (Rel). Acts by bridging the NF-kappa-B factor Rel and the Brahma complex through bap60 interaction, leading to activation a subset of NF-kappa-B factor Relish (Rel) effector genes. Not part of the Toll pathway. Required for the formation of the heart by promoting expression ot tinman (tin). This Drosophila melanogaster (Fruit fly) protein is Akirin.